The sequence spans 158 residues: Cyclic pyranopterin monophosphate synthase (158 aa).

Substrate contacts are provided by residues 74–76 (MCH) and 112–113 (ME). The active site involves Asp127.

Belongs to the MoaC family. As to quaternary structure, homohexamer; trimer of dimers.

It catalyses the reaction (8S)-3',8-cyclo-7,8-dihydroguanosine 5'-triphosphate = cyclic pyranopterin phosphate + diphosphate. It participates in cofactor biosynthesis; molybdopterin biosynthesis. In terms of biological role, catalyzes the conversion of (8S)-3',8-cyclo-7,8-dihydroguanosine 5'-triphosphate to cyclic pyranopterin monophosphate (cPMP). The protein is Cyclic pyranopterin monophosphate synthase of Helicobacter pylori (strain J99 / ATCC 700824) (Campylobacter pylori J99).